The chain runs to 706 residues: Methionine--tRNA ligase (706 aa).

Residues 13–23 (PYANGNFHIGH) carry the 'HIGH' region motif. Zn(2+)-binding residues include cysteine 144, cysteine 147, cysteine 157, and cysteine 160. The 'KMSKS' region motif lies at 341-345 (KMSKS). ATP is bound at residue lysine 344. In terms of domain architecture, tRNA-binding spans 600-706 (DFAKIDLRIA…PGATPGMRVR (107 aa)).

The protein belongs to the class-I aminoacyl-tRNA synthetase family. MetG type 1 subfamily. In terms of assembly, homodimer. The cofactor is Zn(2+).

It is found in the cytoplasm. The enzyme catalyses tRNA(Met) + L-methionine + ATP = L-methionyl-tRNA(Met) + AMP + diphosphate. Its function is as follows. Is required not only for elongation of protein synthesis but also for the initiation of all mRNA translation through initiator tRNA(fMet) aminoacylation. The polypeptide is Methionine--tRNA ligase (Paracidovorax citrulli (strain AAC00-1) (Acidovorax citrulli)).